A 162-amino-acid polypeptide reads, in one-letter code: Large ribosomal subunit protein uL10 (162 aa).

This sequence belongs to the universal ribosomal protein uL10 family. Part of the ribosomal stalk of the 50S ribosomal subunit. The N-terminus interacts with L11 and the large rRNA to form the base of the stalk. The C-terminus forms an elongated spine to which L12 dimers bind in a sequential fashion forming a multimeric L10(L12)X complex.

Forms part of the ribosomal stalk, playing a central role in the interaction of the ribosome with GTP-bound translation factors. The polypeptide is Large ribosomal subunit protein uL10 (Phytoplasma mali (strain AT)).